A 353-amino-acid chain; its full sequence is MLPSLQSLSKKVLAKQCIPVDQYHILKCCGLWWYDGPITFYTYRNKMFIKSTCFSEGIELNTVLMKAAKENNHDLIRLFVEWGADINYGLVCAHSEHTRNLCRELGAKDRLDREYILKIFFDTTRNKTDSNIILCHEMFSNNPNLKHVDDLDLREEIMWELRGLMEITYMLDHDNSFSNMLTKYWYAIAVDYGLKKAIHYFYQKYTHLHRWRLMCALFYNNVFDLHELYEIERVRMDIDEMMHIACIQDYSYSAIYYCFIMGANINQAMFVSIQNYNLGNMFFCIDLGANAFEEGKTLAIQKENYLIADALSLKHYNPVISLLSAVTDPEKINSMLKNYHSKNMVVFLDYERR.

The ANK repeat unit spans residues 59–88 (ELNTVLMKAAKENNHDLIRLFVEWGADINY).

The protein belongs to the asfivirus MGF 360 family. Interacts with host TBK1 ad IRF7.

Functionally, plays a role in virus cell tropism, and may be required for efficient virus replication in macrophages. In addition, inhibits the phosphorylation of host TBK1 and IRF7 and thereby negatively regulates the host cGAS signaling pathway and antagonizes IFN-mediated antiviral activity. This chain is Protein MGF 360-11L, found in African swine fever virus (isolate Pig/Kenya/KEN-50/1950) (ASFV).